The sequence spans 299 residues: Lysine exporter LysO (299 aa).

8 consecutive transmembrane segments (helical) span residues 1–21, 31–51, 58–78, 109–129, 131–151, 169–189, 207–227, and 277–297; these read MFSG…IPLR, QLLS…LAFL, LLAI…CNIA, LKLC…LAFL, HATE…GIQL, IVAV…AFIL, SLSG…AAFF, and PAAI…IAFF.

The protein belongs to the LysO family.

The protein localises to the cell inner membrane. Its function is as follows. Mediates export of lysine. This is Lysine exporter LysO from Escherichia coli (strain K12).